A 746-amino-acid polypeptide reads, in one-letter code: Protein psiN (746 aa).

An N-terminal signal peptide occupies residues 1–23 (MGNINKKLFYFLIQLITILIVLS). The Extracellular portion of the chain corresponds to 24–679 (DDSYNSLLPL…KCQSAAVKAA (656 aa)). N-linked (GlcNAc...) asparagine glycans are attached at residues Asn-97 and Asn-124. The 152-residue stretch at 125 to 276 (VTSDDPRIYS…YDYCGVCEGM (152 aa)) folds into the PA14 domain. N-linked (GlcNAc...) asparagine glycans are attached at residues Asn-319, Asn-353, Asn-380, Asn-477, Asn-553, Asn-628, and Asn-654. The helical transmembrane segment at 680-700 (VGVGAGAAAGIAIGGAIALGL) threads the bilayer. Residues 701–746 (AAFGGKRGYDAWKSSRDNQIQTSSENPLYNPNPNQGDNPLYAANNS) are Cytoplasmic-facing. The disordered stretch occupies residues 714–746 (SSRDNQIQTSSENPLYNPNPNQGDNPLYAANNS). The span at 717 to 746 (DNQIQTSSENPLYNPNPNQGDNPLYAANNS) shows a compositional bias: polar residues.

It belongs to the prespore-cell-inducing factor family.

It is found in the membrane. This Dictyostelium discoideum (Social amoeba) protein is Protein psiN (psiN).